Consider the following 734-residue polypeptide: Regulator of G-protein signaling rgs-6 (734 aa).

Residues 1-24 form a disordered region; it reads MSTPCSGNEPATPTNTSPNNETSN. Low complexity predominate over residues 8-24; it reads NEPATPTNTSPNNETSN. In terms of domain architecture, RGS spans 46 to 157; it reads IFKKVIRDPV…YDCWPRFLRS (112 aa). Disordered stretches follow at residues 162 to 236, 489 to 515, and 538 to 734; these read QPSF…SPTH, HAVS…YSPA, and VNAG…AAYV. Over residues 166–176 the composition is skewed to acidic residues; the sequence is TDEELAADDED. Over residues 180 to 191 the composition is skewed to polar residues; that stretch reads HSQPTSLNNTNE. The span at 194-208 shows a compositional bias: low complexity; sequence AAAQQSQPAPNAPAA. 2 stretches are compositionally biased toward polar residues: residues 494 to 506 and 538 to 557; these read SDPN…SQDR and VNAG…SKNR. Composition is skewed to basic and acidic residues over residues 563 to 585 and 606 to 619; these read SKTE…RSDD and TTEE…KSGD. Positions 642–694 are enriched in low complexity; the sequence is AAAAAAGASPSTSAPSTSTSVQTKTTTSPTKSPTSTTITTSGTTTSATSSVAT. Polar residues-rich tracts occupy residues 705-715 and 724-734; these read SASTPATSSQL and RESSWQTAAYV.

The chain is Regulator of G-protein signaling rgs-6 from Caenorhabditis elegans.